Consider the following 423-residue polypeptide: Protein FAM43A (423 aa).

Acidic residues predominate over residues 263-283 (EQELQEEEEEEQPEGCPEEEE). Disordered stretches follow at residues 263–298 (EQEL…EAEA), 321–344 (RGEA…LLLG), and 382–423 (LSGD…PHSG). Residues 323-335 (EALGGGGGSLGPG) are compositionally biased toward gly residues. The segment covering 383–393 (SGDSTGSESSI) has biased composition (low complexity). Residues 401–411 (TSATAGDSSRQ) show a composition bias toward polar residues.

The protein belongs to the FAM43 family.

This Homo sapiens (Human) protein is Protein FAM43A (FAM43A).